Reading from the N-terminus, the 346-residue chain is 4-hydroxy-3-methylbut-2-enyl diphosphate reductase (346 aa).

Position 19 (cysteine 19) interacts with [4Fe-4S] cluster. (2E)-4-hydroxy-3-methylbut-2-enyl diphosphate contacts are provided by histidine 48 and histidine 84. Dimethylallyl diphosphate is bound by residues histidine 48 and histidine 84. Histidine 48 and histidine 84 together coordinate isopentenyl diphosphate. Cysteine 106 contacts [4Fe-4S] cluster. Histidine 134 provides a ligand contact to (2E)-4-hydroxy-3-methylbut-2-enyl diphosphate. Histidine 134 is a binding site for dimethylallyl diphosphate. Histidine 134 contributes to the isopentenyl diphosphate binding site. Residue glutamate 136 is the Proton donor of the active site. Threonine 175 is a binding site for (2E)-4-hydroxy-3-methylbut-2-enyl diphosphate. Residue cysteine 205 coordinates [4Fe-4S] cluster. 4 residues coordinate (2E)-4-hydroxy-3-methylbut-2-enyl diphosphate: serine 233, serine 234, asparagine 235, and serine 278. Dimethylallyl diphosphate contacts are provided by serine 233, serine 234, asparagine 235, and serine 278. Isopentenyl diphosphate contacts are provided by serine 233, serine 234, asparagine 235, and serine 278.

This sequence belongs to the IspH family. [4Fe-4S] cluster serves as cofactor.

It catalyses the reaction isopentenyl diphosphate + 2 oxidized [2Fe-2S]-[ferredoxin] + H2O = (2E)-4-hydroxy-3-methylbut-2-enyl diphosphate + 2 reduced [2Fe-2S]-[ferredoxin] + 2 H(+). The enzyme catalyses dimethylallyl diphosphate + 2 oxidized [2Fe-2S]-[ferredoxin] + H2O = (2E)-4-hydroxy-3-methylbut-2-enyl diphosphate + 2 reduced [2Fe-2S]-[ferredoxin] + 2 H(+). The protein operates within isoprenoid biosynthesis; dimethylallyl diphosphate biosynthesis; dimethylallyl diphosphate from (2E)-4-hydroxy-3-methylbutenyl diphosphate: step 1/1. It participates in isoprenoid biosynthesis; isopentenyl diphosphate biosynthesis via DXP pathway; isopentenyl diphosphate from 1-deoxy-D-xylulose 5-phosphate: step 6/6. Its function is as follows. Catalyzes the conversion of 1-hydroxy-2-methyl-2-(E)-butenyl 4-diphosphate (HMBPP) into a mixture of isopentenyl diphosphate (IPP) and dimethylallyl diphosphate (DMAPP). Acts in the terminal step of the DOXP/MEP pathway for isoprenoid precursor biosynthesis. The protein is 4-hydroxy-3-methylbut-2-enyl diphosphate reductase of Brucella suis biovar 1 (strain 1330).